The following is a 239-amino-acid chain: ATP-dependent dethiobiotin synthetase BioD (239 aa).

15-20 (EIGKTF) contributes to the ATP binding site. Residue Thr19 coordinates Mg(2+). Lys40 is an active-site residue. ATP is bound by residues Asp57, 118-121 (EGVG), and 178-179 (NH). Mg(2+)-binding residues include Asp57 and Glu118.

It belongs to the dethiobiotin synthetase family. As to quaternary structure, homodimer. Mg(2+) is required as a cofactor.

It is found in the cytoplasm. The catalysed reaction is (7R,8S)-7,8-diammoniononanoate + CO2 + ATP = (4R,5S)-dethiobiotin + ADP + phosphate + 3 H(+). The protein operates within cofactor biosynthesis; biotin biosynthesis; biotin from 7,8-diaminononanoate: step 1/2. In terms of biological role, catalyzes a mechanistically unusual reaction, the ATP-dependent insertion of CO2 between the N7 and N8 nitrogen atoms of 7,8-diaminopelargonic acid (DAPA, also called 7,8-diammoniononanoate) to form a ureido ring. This is ATP-dependent dethiobiotin synthetase BioD from Burkholderia cenocepacia (strain ATCC BAA-245 / DSM 16553 / LMG 16656 / NCTC 13227 / J2315 / CF5610) (Burkholderia cepacia (strain J2315)).